Here is a 647-residue protein sequence, read N- to C-terminus: DNA mismatch repair protein MutL (647 aa).

Belongs to the DNA mismatch repair MutL/HexB family.

Its function is as follows. This protein is involved in the repair of mismatches in DNA. It is required for dam-dependent methyl-directed DNA mismatch repair. May act as a 'molecular matchmaker', a protein that promotes the formation of a stable complex between two or more DNA-binding proteins in an ATP-dependent manner without itself being part of a final effector complex. This chain is DNA mismatch repair protein MutL, found in Koribacter versatilis (strain Ellin345).